We begin with the raw amino-acid sequence, 202 residues long: 3-isopropylmalate dehydratase small subunit (202 aa).

The protein belongs to the LeuD family. LeuD type 1 subfamily. Heterodimer of LeuC and LeuD.

The enzyme catalyses (2R,3S)-3-isopropylmalate = (2S)-2-isopropylmalate. It functions in the pathway amino-acid biosynthesis; L-leucine biosynthesis; L-leucine from 3-methyl-2-oxobutanoate: step 2/4. Its function is as follows. Catalyzes the isomerization between 2-isopropylmalate and 3-isopropylmalate, via the formation of 2-isopropylmaleate. The chain is 3-isopropylmalate dehydratase small subunit from Rhizobium etli (strain ATCC 51251 / DSM 11541 / JCM 21823 / NBRC 15573 / CFN 42).